A 509-amino-acid polypeptide reads, in one-letter code: Protein root UVB sensitive 5 (509 aa).

Residues 22-49 (CQPKRRRVEHLRCSAQPSSIREDDEDAD) are disordered.

The protein belongs to the RUS1 family.

This is Protein root UVB sensitive 5 from Arabidopsis thaliana (Mouse-ear cress).